A 452-amino-acid chain; its full sequence is Coproporphyrinogen III oxidase, anaerobic 1 (452 aa).

A Radical SAM core domain is found at 45–278 (LDPAVPISVY…ANLAARLFTE (234 aa)). Residue Y54 participates in S-adenosyl-L-methionine binding. [4Fe-4S] cluster is bound by residues C60 and C64. An S-adenosyl-L-methionine-binding site is contributed by F66. C67 serves as a coordination point for [4Fe-4S] cluster. Residues G111, 112-113 (GT), E144, Q171, R183, and D208 contribute to the S-adenosyl-L-methionine site.

Belongs to the anaerobic coproporphyrinogen-III oxidase family. Monomer. Requires [4Fe-4S] cluster as cofactor.

It localises to the cytoplasm. The enzyme catalyses coproporphyrinogen III + 2 S-adenosyl-L-methionine = protoporphyrinogen IX + 2 5'-deoxyadenosine + 2 L-methionine + 2 CO2. It participates in porphyrin-containing compound metabolism; protoporphyrin-IX biosynthesis; protoporphyrinogen-IX from coproporphyrinogen-III (AdoMet route): step 1/1. Its function is as follows. Anaerobic transformation of coproporphyrinogen III into protoporphyrinogen IX. Dedicated to bacteriochlorophyll biosynthesis. The protein is Coproporphyrinogen III oxidase, anaerobic 1 (hemN) of Cereibacter sphaeroides (strain ATCC 17023 / DSM 158 / JCM 6121 / CCUG 31486 / LMG 2827 / NBRC 12203 / NCIMB 8253 / ATH 2.4.1.) (Rhodobacter sphaeroides).